We begin with the raw amino-acid sequence, 547 residues long: CTP synthase (547 aa).

The interval 1 to 265 is amidoligase domain; sequence MARYIFITGG…DQAVLDAFDI (265 aa). CTP is bound at residue Ser13. Residue Ser13 coordinates UTP. ATP is bound by residues 14–19 and Asp71; that span reads SLGKGL. Mg(2+) is bound by residues Asp71 and Glu139. Residues 146–148, 186–191, and Lys222 contribute to the CTP site; these read DIE and KTKPTQ. Residues 186–191 and Lys222 each bind UTP; that span reads KTKPTQ. The 256-residue stretch at 291–546 folds into the Glutamine amidotransferase type-1 domain; it reads KVAIVGKYTQ…IRAAKENSRL (256 aa). Gly353 contacts L-glutamine. Cys380 serves as the catalytic Nucleophile; for glutamine hydrolysis. L-glutamine-binding positions include 381-384, Glu404, and Arg474; that span reads LGMQ. Catalysis depends on residues His519 and Glu521.

It belongs to the CTP synthase family. In terms of assembly, homotetramer.

It catalyses the reaction UTP + L-glutamine + ATP + H2O = CTP + L-glutamate + ADP + phosphate + 2 H(+). The enzyme catalyses L-glutamine + H2O = L-glutamate + NH4(+). The catalysed reaction is UTP + NH4(+) + ATP = CTP + ADP + phosphate + 2 H(+). It functions in the pathway pyrimidine metabolism; CTP biosynthesis via de novo pathway; CTP from UDP: step 2/2. Allosterically activated by GTP, when glutamine is the substrate; GTP has no effect on the reaction when ammonia is the substrate. The allosteric effector GTP functions by stabilizing the protein conformation that binds the tetrahedral intermediate(s) formed during glutamine hydrolysis. Inhibited by the product CTP, via allosteric rather than competitive inhibition. Functionally, catalyzes the ATP-dependent amination of UTP to CTP with either L-glutamine or ammonia as the source of nitrogen. Regulates intracellular CTP levels through interactions with the four ribonucleotide triphosphates. The chain is CTP synthase from Roseobacter denitrificans (strain ATCC 33942 / OCh 114) (Erythrobacter sp. (strain OCh 114)).